Here is a 1347-residue protein sequence, read N- to C-terminus: Protocadherin-11 X-linked (1347 aa).

A signal peptide spans 1–23; sequence MDLLSGTYIFAVLLACVVFHSGA. The Extracellular segment spans residues 24 to 812; that stretch reads QEKNYTIREE…VSSPTSDYVK (789 aa). Cadherin domains lie at 26-139, 140-249, 250-355, 362-466, 467-570, 571-673, and 677-795; these read KNYT…APLF, PATV…HPVF, KETE…VPSI, NPVN…APVF, TQSF…SPVF, THNE…KPVF, and PSNY…APVT. 3 N-linked (GlcNAc...) asparagine glycosylation sites follow: asparagine 27, asparagine 48, and asparagine 54. Residue asparagine 344 is glycosylated (N-linked (GlcNAc...) asparagine). N-linked (GlcNAc...) asparagine glycosylation occurs at asparagine 553. Asparagine 773 carries an N-linked (GlcNAc...) asparagine glycan. Residues 813–833 traverse the membrane as a helical segment; it reads ILVAAVAGTITVVVVIFITAV. The Cytoplasmic segment spans residues 834–1347; that stretch reads VRCRQAPHLK…DSPVMEEHPL (514 aa). 3 disordered regions span residues 1057-1091, 1097-1116, and 1325-1347; these read LPEG…GYPQ, RATP…ESTF, and TFTP…EHPL.

It localises to the cell membrane. Potential calcium-dependent cell-adhesion protein. This is Protocadherin-11 X-linked (PCDH11X) from Pan paniscus (Pygmy chimpanzee).